A 298-amino-acid polypeptide reads, in one-letter code: Cyanophycinase (298 aa).

Active-site charge relay system residues include Ser-155, Glu-173, and His-197.

Belongs to the peptidase S51 family.

It catalyses the reaction [L-4-(L-arginin-2-N-yl)aspartate](n) + H2O = [L-4-(L-arginin-2-N-yl)aspartate](n-1) + L-4-(L-arginin-2-N-yl)aspartate. Exopeptidase that catalyzes the hydrolytic cleavage of multi-L-arginyl-poly-L-aspartic acid (cyanophycin; a water-insoluble reserve polymer) into aspartate-arginine dipeptides. This Nostoc sp. (strain PCC 7120 / SAG 25.82 / UTEX 2576) protein is Cyanophycinase (cphB).